Consider the following 568-residue polypeptide: Potassium-transporting ATPase potassium-binding subunit (568 aa).

A run of 10 helical transmembrane segments spans residues 3-23, 68-88, 133-153, 180-200, 256-276, 281-301, 375-395, 421-441, 497-517, and 535-555; these read TEVL…YPLG, LLVV…TQGV, FVIM…MAGI, LLPL…PMGF, VECW…GFYL, LGYS…CINV, FGGV…AVFI, IVAL…AYLF, IVLI…AGIL, and VTFG…SFFP.

It belongs to the KdpA family. In terms of assembly, the system is composed of three essential subunits: KdpA, KdpB and KdpC.

It is found in the cell inner membrane. Functionally, part of the high-affinity ATP-driven potassium transport (or Kdp) system, which catalyzes the hydrolysis of ATP coupled with the electrogenic transport of potassium into the cytoplasm. This subunit binds the periplasmic potassium ions and delivers the ions to the membrane domain of KdpB through an intramembrane tunnel. The protein is Potassium-transporting ATPase potassium-binding subunit of Phocaeicola vulgatus (strain ATCC 8482 / DSM 1447 / JCM 5826 / CCUG 4940 / NBRC 14291 / NCTC 11154) (Bacteroides vulgatus).